The sequence spans 846 residues: uncharacterized protein (846 aa).

WD repeat units lie at residues 88-129, 132-172, 175-215, 219-258, 262-309, and 313-348; these read TKHI…LLYD, EHSR…STIT, GNSE…LPFL, AHNG…KKSL, NNVS…IPYR, and CHDS…NAFN. The segment at 541 to 560 is disordered; it reads PREASTPSESSNSSIESEDN. A compositionally biased stretch (low complexity) spans 544 to 555; it reads ASTPSESSNSSI. The stretch at 624–663 is one WD 7 repeat; it reads FHRSSVTSASIKSREAVLSAGNSSRRASIFLDQLSLHGDT.

This is an uncharacterized protein from Schizosaccharomyces pombe (strain 972 / ATCC 24843) (Fission yeast).